Here is a 105-residue protein sequence, read N- to C-terminus: Guanyl-specific ribonuclease Ms (105 aa).

Intrachain disulfides connect Cys3/Cys11 and Cys7/Cys102. Residue His39 is part of the active site. Glu57 serves as the catalytic Proton acceptor. The Proton donor role is filled by His91.

It belongs to the ribonuclease N1/T1 family.

It carries out the reaction [RNA] containing guanosine + H2O = an [RNA fragment]-3'-guanosine-3'-phosphate + a 5'-hydroxy-ribonucleotide-3'-[RNA fragment].. The protein is Guanyl-specific ribonuclease Ms of Aspergillus phoenicis (Aspergillus saitoi).